Reading from the N-terminus, the 828-residue chain is Periplasmic nitrate reductase (828 aa).

Positions 1–33 (MKLSRRDFMKANAAVAAAAAAGLTIPTVVQAAA) form a signal peptide, tat-type signal. The 4Fe-4S Mo/W bis-MGD-type domain maps to 39–95 (IKWDKAPCRFCGTGCGVLVGTQNGRIVASQGDPEAAVNRGLSCIKGYFLPKIMYGKD). Cys46, Cys49, Cys53, and Cys81 together coordinate [4Fe-4S] cluster. Mo-bis(molybdopterin guanine dinucleotide) contacts are provided by residues Lys83, Gln150, Asn175, Cys179, 212-219 (WGSNMAEM), 243-247 (STFEH), 262-264 (QTD), Met372, Gln376, Asn482, 508-509 (SD), Lys531, Asp558, and 718-727 (TGRVLEHWHT). Phe794 serves as a coordination point for substrate. Residues Asn802 and Lys819 each contribute to the Mo-bis(molybdopterin guanine dinucleotide) site.

It belongs to the prokaryotic molybdopterin-containing oxidoreductase family. NasA/NapA/NarB subfamily. As to quaternary structure, component of the periplasmic nitrate reductase NapAB complex composed of NapA and NapB. [4Fe-4S] cluster is required as a cofactor. Mo-bis(molybdopterin guanine dinucleotide) serves as cofactor. Post-translationally, predicted to be exported by the Tat system. The position of the signal peptide cleavage has not been experimentally proven.

It is found in the periplasm. It catalyses the reaction 2 Fe(II)-[cytochrome] + nitrate + 2 H(+) = 2 Fe(III)-[cytochrome] + nitrite + H2O. Functionally, catalytic subunit of the periplasmic nitrate reductase complex NapAB. Receives electrons from NapB and catalyzes the reduction of nitrate to nitrite. This is Periplasmic nitrate reductase from Serratia proteamaculans (strain 568).